Here is a 477-residue protein sequence, read N- to C-terminus: MESFDADTNSTDLHSRPLFQPQDIASMVILGLTCLLGLLGNGLVLWVAGVKMKTTVNTVWFLHLTLADFLCCLSLPFSLAHLILQGHWPYGLFLCKLIPSIIILNMFASVFLLTAISLDRCLIVHKPIWCQNHRNVRTAFAICGCVWVVAFVMCVPVFVYRDLFIMDNRSICRYNFDSSRSYDYWDYVYKLSLPESNSTDNSTAQLTGHMNDRSAPSSVQARDYFWTVTTALQSQPFLTSPEDSFSLDSANQQPHYGGKPPNVLTAAVPSGFPVEDRKSNTLNADAFLSAHTELFPTASSGHLYPYDFQGDYVDQFTYDNHVPTPLMAITITRLVVGFLVPFFIMVICYSLIVFRMRKTNFTKSRNKTFRVAVAVVTVFFICWTPYHLVGVLLLITDPESSLGEAVMSWDHMSIALASANSCFNPFLYALLGKDFRKKARQSIKGILEAAFSEELTHSTNCTQDKASSKRNNMSTDV.

Residues 1-23 (MESFDADTNSTDLHSRPLFQPQD) are Extracellular-facing. N-linked (GlcNAc...) asparagine glycosylation occurs at N9. Residues 24-46 (IASMVILGLTCLLGLLGNGLVLW) form a helical membrane-spanning segment. The Cytoplasmic portion of the chain corresponds to 47 to 57 (VAGVKMKTTVN). A helical transmembrane segment spans residues 58–80 (TVWFLHLTLADFLCCLSLPFSLA). The Extracellular segment spans residues 81 to 96 (HLILQGHWPYGLFLCK). An intrachain disulfide couples C95 to C172. Residues 97–118 (LIPSIIILNMFASVFLLTAISL) form a helical membrane-spanning segment. At 119–139 (DRCLIVHKPIWCQNHRNVRTA) the chain is on the cytoplasmic side. Residues 140 to 160 (FAICGCVWVVAFVMCVPVFVY) form a helical membrane-spanning segment. Over 161-333 (RDLFIMDNRS…TPLMAITITR (173 aa)) the chain is Extracellular. N168 carries N-linked (GlcNAc...) asparagine glycosylation. Sulfotyrosine is present on residues Y174 and Y184. Residues N197 and N201 are each glycosylated (N-linked (GlcNAc...) asparagine). Y312 is modified (sulfotyrosine). A helical transmembrane segment spans residues 334–353 (LVVGFLVPFFIMVICYSLIV). Residues 354 to 370 (FRMRKTNFTKSRNKTFR) are Cytoplasmic-facing. The chain crosses the membrane as a helical span at residues 371–393 (VAVAVVTVFFICWTPYHLVGVLL). Residues 394-410 (LITDPESSLGEAVMSWD) are Extracellular-facing. A helical transmembrane segment spans residues 411–431 (HMSIALASANSCFNPFLYALL). Topologically, residues 432–477 (GKDFRKKARQSIKGILEAAFSEELTHSTNCTQDKASSKRNNMSTDV) are cytoplasmic. S452 is subject to Phosphoserine. The residue at position 456 (T456) is a Phosphothreonine.

It belongs to the G-protein coupled receptor 1 family. In terms of assembly, interacts with VGF-derived peptide TLQP-21. In terms of tissue distribution, detected in varying levels in all tissues examined except the spleen. Especially abundant in heart and lung.

The protein localises to the cell membrane. Functionally, receptor for the chemotactic and inflammatory peptide anaphylatoxin C3a. This receptor stimulates chemotaxis, granule enzyme release and superoxide anion production. The polypeptide is C3a anaphylatoxin chemotactic receptor (C3ar1) (Mus musculus (Mouse)).